We begin with the raw amino-acid sequence, 490 residues long: Cytochrome P450 71A25 (490 aa).

Residues 1-21 form a helical membrane-spanning segment; sequence MMMMIILLWSIIFMTILFLKK. Residue Cys431 coordinates heme.

It belongs to the cytochrome P450 family. The cofactor is heme.

It localises to the membrane. The sequence is that of Cytochrome P450 71A25 (CYP71A25) from Arabidopsis thaliana (Mouse-ear cress).